We begin with the raw amino-acid sequence, 82 residues long: Conotoxin Gla-TxX (82 aa).

A signal peptide spans methionine 1–cysteine 25. Residues glutamate 30, glutamate 34, glutamate 37, glutamate 40, and glutamate 41 each carry the 4-carboxyglutamate modification. At asparagine 72 the chain carries Asparagine amide. The propeptide occupies leucine 77–lysine 82.

In terms of processing, contains 4 disulfide bonds. In terms of tissue distribution, expressed by the venom duct.

The protein localises to the secreted. The chain is Conotoxin Gla-TxX from Conus textile (Cloth-of-gold cone).